The sequence spans 951 residues: AP-1 complex subunit beta-1 (951 aa).

Lys318 bears the N6-acetyllysine mark. Tyr574 bears the 3'-nitrotyrosine mark.

Belongs to the adaptor complexes large subunit family. Adaptor protein complex 1 (AP-1) is a heterotetramer composed of two large adaptins (gamma-type subunit AP1G1 and beta-type subunit AP1B1), a medium adaptin (mu-type subunit AP1M1 or AP1M2) and a small adaptin (sigma-type subunit AP1S1 or AP1S2 or AP1S3).

It localises to the cytoplasmic vesicle. It is found in the clathrin-coated vesicle membrane. Its subcellular location is the golgi apparatus. Subunit of clathrin-associated adaptor protein complex 1 that plays a role in protein sorting in the late-Golgi/trans-Golgi network (TGN) and/or endosomes. The AP complexes mediate both the recruitment of clathrin to membranes and the recognition of sorting signals within the cytosolic tails of transmembrane cargo molecules. The sequence is that of AP-1 complex subunit beta-1 (AP2B1) from Bos taurus (Bovine).